Here is a 309-residue protein sequence, read N- to C-terminus: Probable manganese-dependent inorganic pyrophosphatase (309 aa).

Residues histidine 9, aspartate 13, aspartate 15, aspartate 75, histidine 97, and aspartate 149 each contribute to the Mn(2+) site.

The protein belongs to the PPase class C family. Mn(2+) is required as a cofactor.

Its subcellular location is the cytoplasm. It carries out the reaction diphosphate + H2O = 2 phosphate + H(+). The protein is Probable manganese-dependent inorganic pyrophosphatase of Bacillus cereus (strain 03BB102).